The primary structure comprises 648 residues: Biosynthetic arginine decarboxylase (648 aa).

Position 109 is an N6-(pyridoxal phosphate)lysine (lysine 109). A substrate-binding site is contributed by isoleucine 291–phenylalanine 301.

This sequence belongs to the Orn/Lys/Arg decarboxylase class-II family. SpeA subfamily. Requires Mg(2+) as cofactor. It depends on pyridoxal 5'-phosphate as a cofactor.

The enzyme catalyses L-arginine + H(+) = agmatine + CO2. It participates in amine and polyamine biosynthesis; agmatine biosynthesis; agmatine from L-arginine: step 1/1. In terms of biological role, catalyzes the biosynthesis of agmatine from arginine. The sequence is that of Biosynthetic arginine decarboxylase from Prochlorococcus marinus (strain MIT 9515).